Here is a 322-residue protein sequence, read N- to C-terminus: Elongation factor P--(R)-beta-lysine ligase (322 aa).

75 to 77 (SPE) is a binding site for substrate. Residue 99–101 (RNE) coordinates ATP. Tyr-117 contributes to the substrate binding site. 241 to 242 (EL) serves as a coordination point for ATP. Glu-248 lines the substrate pocket. An ATP-binding site is contributed by Gly-297.

This sequence belongs to the class-II aminoacyl-tRNA synthetase family. EpmA subfamily. As to quaternary structure, homodimer.

The catalysed reaction is D-beta-lysine + L-lysyl-[protein] + ATP = N(6)-((3R)-3,6-diaminohexanoyl)-L-lysyl-[protein] + AMP + diphosphate + H(+). Its function is as follows. With EpmB is involved in the beta-lysylation step of the post-translational modification of translation elongation factor P (EF-P). Catalyzes the ATP-dependent activation of (R)-beta-lysine produced by EpmB, forming a lysyl-adenylate, from which the beta-lysyl moiety is then transferred to the epsilon-amino group of a conserved specific lysine residue in EF-P. In Avibacterium paragallinarum (Haemophilus gallinarum), this protein is Elongation factor P--(R)-beta-lysine ligase.